The primary structure comprises 93 residues: Pyrimidine/purine nucleoside phosphorylase (93 aa).

It belongs to the nucleoside phosphorylase PpnP family.

The catalysed reaction is a purine D-ribonucleoside + phosphate = a purine nucleobase + alpha-D-ribose 1-phosphate. It carries out the reaction adenosine + phosphate = alpha-D-ribose 1-phosphate + adenine. The enzyme catalyses cytidine + phosphate = cytosine + alpha-D-ribose 1-phosphate. It catalyses the reaction guanosine + phosphate = alpha-D-ribose 1-phosphate + guanine. The catalysed reaction is inosine + phosphate = alpha-D-ribose 1-phosphate + hypoxanthine. It carries out the reaction thymidine + phosphate = 2-deoxy-alpha-D-ribose 1-phosphate + thymine. The enzyme catalyses uridine + phosphate = alpha-D-ribose 1-phosphate + uracil. It catalyses the reaction xanthosine + phosphate = alpha-D-ribose 1-phosphate + xanthine. Functionally, catalyzes the phosphorolysis of diverse nucleosides, yielding D-ribose 1-phosphate and the respective free bases. Can use uridine, adenosine, guanosine, cytidine, thymidine, inosine and xanthosine as substrates. Also catalyzes the reverse reactions. The sequence is that of Pyrimidine/purine nucleoside phosphorylase from Shewanella pealeana (strain ATCC 700345 / ANG-SQ1).